Here is a 419-residue protein sequence, read N- to C-terminus: Voltage-gated potassium channel subunit beta-1 (419 aa).

Residues Met-1–Glu-52 form a disordered region. Over residues Gly-30–Lys-43 the composition is skewed to basic and acidic residues. 4 residues coordinate NADP(+): Thr-108, Trp-109, Gln-115, and Asp-137. Residue Tyr-142 is the Proton donor/acceptor of the active site. The NADP(+) site is built by Asn-210, Ser-240, Arg-241, Gln-266, Trp-295, Ser-296, Pro-297, Leu-298, Ala-299, Cys-300, Lys-306, Arg-316, Gly-375, Ser-377, Gln-381, Glu-384, and Asn-385.

This sequence belongs to the shaker potassium channel beta subunit family. In terms of assembly, homotetramer. Interaction with tetrameric potassium channel alpha subunits gives rise to a heterooctamer. Identified in potassium channel complexes containing KCNA1, KCNA2, KCNA4, KCNA5, KCNA6, KCNAB1 and KCNAB2. Part of a complex containing KCNA1, KCNA4 and LGI1; interaction with LGI1 inhibits down-regulation of KCNA1 channel activity. Interacts with the dimer formed by GNB1 and GNG2; this enhances KCNA1 binding. Interacts with SQSTM1. As to expression, in brain, expression is most prominent in caudate nucleus, hippocampus and thalamus. Significant expression also detected in amygdala and subthalamic nucleus. Also expressed in both healthy and cardiomyopathic heart. Up to four times more abundant in left ventricle than left atrium.

It is found in the cytoplasm. It localises to the membrane. The protein resides in the cell membrane. The catalysed reaction is a primary alcohol + NADP(+) = an aldehyde + NADPH + H(+). The enzyme catalyses a secondary alcohol + NADP(+) = a ketone + NADPH + H(+). In terms of biological role, regulatory subunit of the voltage-gated potassium (Kv) Shaker channels composed of pore-forming and potassium-conducting alpha subunits and of regulatory beta subunits. The beta-1/KCNAB1 cytoplasmic subunit mediates closure of delayed rectifier potassium channels by physically obstructing the pore via its N-terminal domain and increases the speed of channel closure for other family members. Promotes the inactivation of Kv1.1/KCNA1, Kv1.2/KCNA2, Kv1.4/KCNA4, Kv1.5/KCNA5 and Kv1.6/KCNA6 alpha subunit-containing channels. Displays nicotinamide adenine dinucleotide phosphate (NADPH)-dependent aldoketoreductase activity by catalyzing the NADPH-dependent reduction of a variety of endogenous aldehydes and ketones. The binding of NADPH is required for efficient down-regulation of potassium channel activity. Oxidation of the bound NADPH restrains N-terminal domain from blocking the channel, thereby decreasing N-type inactivation of potassium channel activity. Its function is as follows. Isoform KvB1.2 shows no effect on KCNA1, KCNA2 or KCNB1. In Homo sapiens (Human), this protein is Voltage-gated potassium channel subunit beta-1.